The primary structure comprises 279 residues: Ankyrin repeat domain-containing protein 7 (279 aa).

Over residues Met1–Arg11 the composition is skewed to basic residues. The disordered stretch occupies residues Met1–Ile25. ANK repeat units follow at residues Arg80–Val109, Glu113–Leu142, Tyr146–Ala175, Asp179–Ala208, and Asn212–His241.

The polypeptide is Ankyrin repeat domain-containing protein 7 (Ankrd7) (Mus musculus (Mouse)).